The chain runs to 318 residues: Acetyl-coenzyme A carboxylase carboxyl transferase subunit alpha (318 aa).

One can recognise a CoA carboxyltransferase C-terminal domain in the interval 31–292; that stretch reads DLIKEVSALE…KDAILRQLEL (262 aa).

The protein belongs to the AccA family. Acetyl-CoA carboxylase is a heterohexamer composed of biotin carboxyl carrier protein (AccB), biotin carboxylase (AccC) and two subunits each of ACCase subunit alpha (AccA) and ACCase subunit beta (AccD).

The protein resides in the cytoplasm. It carries out the reaction N(6)-carboxybiotinyl-L-lysyl-[protein] + acetyl-CoA = N(6)-biotinyl-L-lysyl-[protein] + malonyl-CoA. Its pathway is lipid metabolism; malonyl-CoA biosynthesis; malonyl-CoA from acetyl-CoA: step 1/1. Functionally, component of the acetyl coenzyme A carboxylase (ACC) complex. First, biotin carboxylase catalyzes the carboxylation of biotin on its carrier protein (BCCP) and then the CO(2) group is transferred by the carboxyltransferase to acetyl-CoA to form malonyl-CoA. The chain is Acetyl-coenzyme A carboxylase carboxyl transferase subunit alpha from Hydrogenovibrio crunogenus (strain DSM 25203 / XCL-2) (Thiomicrospira crunogena).